The primary structure comprises 326 residues: Beta-ketoacyl-[acyl-carrier-protein] synthase III (326 aa).

Active-site residues include Cys-112 and His-251. The ACP-binding stretch occupies residues 252-256 (QANSR). Residue Asn-281 is part of the active site.

The protein belongs to the thiolase-like superfamily. FabH family. As to quaternary structure, homodimer.

It is found in the cytoplasm. The catalysed reaction is malonyl-[ACP] + acetyl-CoA + H(+) = 3-oxobutanoyl-[ACP] + CO2 + CoA. Its pathway is lipid metabolism; fatty acid biosynthesis. Its function is as follows. Catalyzes the condensation reaction of fatty acid synthesis by the addition to an acyl acceptor of two carbons from malonyl-ACP. Catalyzes the first condensation reaction which initiates fatty acid synthesis and may therefore play a role in governing the total rate of fatty acid production. Possesses both acetoacetyl-ACP synthase and acetyl transacylase activities. Its substrate specificity determines the biosynthesis of branched-chain and/or straight-chain of fatty acids. The protein is Beta-ketoacyl-[acyl-carrier-protein] synthase III of Clostridium botulinum (strain Okra / Type B1).